The sequence spans 122 residues: Large ribosomal subunit protein bL12 (122 aa).

This sequence belongs to the bacterial ribosomal protein bL12 family. Homodimer. Part of the ribosomal stalk of the 50S ribosomal subunit. Forms a multimeric L10(L12)X complex, where L10 forms an elongated spine to which 2 to 4 L12 dimers bind in a sequential fashion. Binds GTP-bound translation factors.

Functionally, forms part of the ribosomal stalk which helps the ribosome interact with GTP-bound translation factors. Is thus essential for accurate translation. The polypeptide is Large ribosomal subunit protein bL12 (Mycoplasma capricolum subsp. capricolum (strain California kid / ATCC 27343 / NCTC 10154)).